A 712-amino-acid chain; its full sequence is Exocyst complex component EXO70I (712 aa).

The first 18 residues, 1–18 (MHKKQLMALLMVPQTSDS), serve as a signal peptide directing secretion. Residues 26–53 (LESAYSDLESLLRSSKQMEQNIETMETR) adopt a coiled-coil conformation. N111 is a glycosylation site (N-linked (GlcNAc...) asparagine).

Belongs to the EXO70 family. In terms of assembly, subunit of the exocyst complex that mediates vesicle tethering during exocytosis. Interacts with VPY at the periarbuscular membrane (PAM) around the arbuscule hyphal tips. In terms of tissue distribution, present at low levels in non-mycorrhizal root tips.

The protein localises to the cell membrane. Functionally, component of an exocyst subcomplex specifically required for periarbuscular membrane (PAM) biogenesis during arbuscular mycorrhizal (AM) symbiosis with AM fungi (e.g. Glomus versiforme), especially critical during the early branching phase of arbuscule development; probably involved in STR and STR2 delivery into the PAM. This is Exocyst complex component EXO70I from Medicago truncatula (Barrel medic).